The sequence spans 383 residues: BRISC and BRCA1-A complex member 2 (383 aa).

Residue methionine 1 is modified to N-acetylmethionine. Phosphoserine is present on serine 2. 2 UEV-like regions span residues 30–147 (DATN…TLLE) and 275–364 (IAAF…RAKA).

The protein belongs to the BABAM2 family. Component of the ARISC complex, at least composed of UIMC1/RAP80, ABRAXAS1, BRCC3/BRCC36, BABAM2 and BABAM1/NBA1. Component of the BRCA1-A complex, at least composed of BRCA1, BARD1, UIMC1/RAP80, ABRAXAS1, BRCC3/BRCC36, BABAM2 and BABAM1/NBA1. In the BRCA1-A complex, interacts directly with ABRAXAS1, BRCC3/BRCC36 and BABAM1/NBA1. Binds polyubiquitin. Component of the BRISC complex, at least composed of ABRAXAS2, BRCC3/BRCC36, BABAM2 and BABAM1/NBA1. Identified in a complex with SHMT2 and the other subunits of the BRISC complex. Component of the BRCA1/BRCA2 containing complex (BRCC), which also contains BRCA1, BRCA2, BARD1, BRCC3/BRCC36 and RAD51. BRCC is a ubiquitin E3 ligase complex that enhances cellular survival following DNA damage. May interact with FAS and TNFRSF1A.

The protein resides in the cytoplasm. The protein localises to the nucleus. Component of the BRCA1-A complex, a complex that specifically recognizes 'Lys-63'-linked ubiquitinated histones H2A and H2AX at DNA lesions sites, leading to target the BRCA1-BARD1 heterodimer to sites of DNA damage at double-strand breaks (DSBs). The BRCA1-A complex also possesses deubiquitinase activity that specifically removes 'Lys-63'-linked ubiquitin on histones H2A and H2AX. In the BRCA1-A complex, it acts as an adapter that bridges the interaction between BABAM1/NBA1 and the rest of the complex, thereby being required for the complex integrity and modulating the E3 ubiquitin ligase activity of the BRCA1-BARD1 heterodimer. Component of the BRISC complex, a multiprotein complex that specifically cleaves 'Lys-63'-linked ubiquitin in various substrates. Within the BRISC complex, acts as an adapter that bridges the interaction between BABAM1/NBA1 and the rest of the complex, thereby being required for the complex integrity. The BRISC complex is required for normal mitotic spindle assembly and microtubule attachment to kinetochores via its role in deubiquitinating NUMA1. The BRISC complex plays a role in interferon signaling via its role in the deubiquitination of the interferon receptor IFNAR1; deubiquitination increases IFNAR1 activity by enhancing its stability and cell surface expression. Down-regulates the response to bacterial lipopolysaccharide (LPS) via its role in IFNAR1 deubiquitination. May play a role in homeostasis or cellular differentiation in cells of neural, epithelial and germline origins. May also act as a death receptor-associated anti-apoptotic protein, which inhibits the mitochondrial apoptotic pathway. May regulate TNF-alpha signaling through its interactions with TNFRSF1A; however these effects may be indirect. In Bos taurus (Bovine), this protein is BRISC and BRCA1-A complex member 2 (BABAM2).